The chain runs to 126 residues: Aspartate 1-decarboxylase (126 aa).

Residue serine 25 is the Schiff-base intermediate with substrate; via pyruvic acid of the active site. Pyruvic acid (Ser) is present on serine 25. Substrate is bound at residue threonine 57. Tyrosine 58 serves as the catalytic Proton donor. A substrate-binding site is contributed by 73–75 (GAA).

The protein belongs to the PanD family. Heterooctamer of four alpha and four beta subunits. The cofactor is pyruvate. In terms of processing, is synthesized initially as an inactive proenzyme, which is activated by self-cleavage at a specific serine bond to produce a beta-subunit with a hydroxyl group at its C-terminus and an alpha-subunit with a pyruvoyl group at its N-terminus.

Its subcellular location is the cytoplasm. The enzyme catalyses L-aspartate + H(+) = beta-alanine + CO2. It functions in the pathway cofactor biosynthesis; (R)-pantothenate biosynthesis; beta-alanine from L-aspartate: step 1/1. Its function is as follows. Catalyzes the pyruvoyl-dependent decarboxylation of aspartate to produce beta-alanine. The polypeptide is Aspartate 1-decarboxylase (Pseudomonas fluorescens).